The chain runs to 769 residues: Serine protease HtrA-like (769 aa).

Over residues 1 to 20 (MDIGKKHVIPKSQYRRKRRE) the composition is skewed to basic residues. Residues 1–388 (MDIGKKHVIP…KKATSKLNKG (388 aa)) form a disordered region. Basic and acidic residues-rich tracts occupy residues 21–64 (FFHN…ERFK), 71–87 (LEQRNRDVNENKAEESK), and 96–108 (YNKDHYLTDDVSK). Over residues 126-139 (YEQNTEATLSTNST) the composition is skewed to polar residues. The segment covering 140 to 186 (DKVESTDMRKLSSDKNKVGHEEQHVLSKPSEHDKETRIDFESSRTDS) has biased composition (basic and acidic residues). Polar residues predominate over residues 247–262 (QQSQNEQTKTYTYGDS). Basic and acidic residues-rich tracts occupy residues 264 to 296 (QNDKSNHENDLSHHTPSISDDKDYVMREDHIVD) and 310 to 330 (KIDDDRKLDEKIHVEDKHKQN). Over residues 331–347 (ADSSETVGYQSQSSASH) the composition is skewed to polar residues. Residues 348–364 (RSTEKRNMAINDHDKLN) show a composition bias toward basic and acidic residues. Positions 366–388 (QKPNTKTSANNNQKKATSKLNKG) are enriched in polar residues. A helical membrane pass occupies residues 410–430 (LVILMGIIILIVILNAIFNNV). Catalysis depends on charge relay system residues His504, Asp534, and Ser619. A PDZ domain is found at 680 to 733 (IASLNSFERQAVKLLGKVKNGVVVDQVDNNGLADQSGLKKGDVITELDGKLLED).

It belongs to the peptidase S1C family.

It is found in the cell membrane. In Staphylococcus aureus (strain MRSA252), this protein is Serine protease HtrA-like.